The sequence spans 517 residues: Nicotine N-demethylase CYP82E4 (517 aa).

Residues 2–22 form a helical membrane-spanning segment; the sequence is VFPIEAIVGLVTFTFLFFFLW. Lys254 participates in a covalent cross-link: Glycyl lysine isopeptide (Lys-Gly) (interchain with G-Cter in ubiquitin). Cys457 is a binding site for heme.

This sequence belongs to the cytochrome P450 family. CYP82E2 subfamily. It depends on heme as a cofactor. As to expression, expressed at low levels in green leaves.

It localises to the membrane. It carries out the reaction (S)-nicotine + reduced [NADPH--hemoprotein reductase] + O2 = (S)-nornicotine + formaldehyde + oxidized [NADPH--hemoprotein reductase] + H2O + H(+). The protein operates within alkaloid biosynthesis; nicotine biosynthesis. In terms of biological role, involved in the biosynthesis of pyridine alkaloid natural products, leading mainly to the production of anabasine, anatabine, nicotine and nornicotine, effective deterrents against herbivores with antiparasitic and pesticide properties (neurotoxins); nornicotine serves as the precursor in the synthesis of the carcinogen compound N'-nitrosonornicotine (NNN). Catalyzes the demethylation of nicotine to form nornicotine. In Nicotiana tabacum (Common tobacco), this protein is Nicotine N-demethylase CYP82E4.